We begin with the raw amino-acid sequence, 249 residues long: Undecaprenyl-diphosphatase (249 aa).

8 consecutive transmembrane segments (helical) span residues 11–31 (GLTEFLPVSSSGHLAIFTAIF), 35–55 (PDVGYFAFLHLATFLAVVIFV), 74–94 (ITLSLKLFVSMIPAAIVGIFF), 101–121 (IFSETFFIGVFLAITGVFMLL), 135–155 (IPYLDAFIIGIFQAFSVLPGI), 175–195 (AVKYSFLMSLPVIFGAGVLEM), 208–228 (FIVAFLTGILGLHLLKKMVIA), and 229–249 (GKLKFFGYYCFLASLFVIFYI).

It belongs to the UppP family.

The protein resides in the cell membrane. The enzyme catalyses di-trans,octa-cis-undecaprenyl diphosphate + H2O = di-trans,octa-cis-undecaprenyl phosphate + phosphate + H(+). In terms of biological role, catalyzes the dephosphorylation of undecaprenyl diphosphate (UPP). The sequence is that of Undecaprenyl-diphosphatase from Methanococcus vannielii (strain ATCC 35089 / DSM 1224 / JCM 13029 / OCM 148 / SB).